We begin with the raw amino-acid sequence, 166 residues long: MANNEQKGGDLQEKLVQVNRVAKVVKGGRIFGFTALTVVGDGSGRVGFGRGKAREVPVAIQKAMDQARRNMVKVSLSGATLQYPVKARHGASKVFMQPASEGTGIIAGGAMRSVLELAGVHDVLAKCYGSTNPVNVVRATIKGLASMQSPEDIAAKRGMSVEEIAG.

The S5 DRBM domain maps to 11 to 74 (LQEKLVQVNR…DQARRNMVKV (64 aa)).

This sequence belongs to the universal ribosomal protein uS5 family. As to quaternary structure, part of the 30S ribosomal subunit. Contacts proteins S4 and S8.

Its function is as follows. With S4 and S12 plays an important role in translational accuracy. Located at the back of the 30S subunit body where it stabilizes the conformation of the head with respect to the body. The polypeptide is Small ribosomal subunit protein uS5 (Chromohalobacter salexigens (strain ATCC BAA-138 / DSM 3043 / CIP 106854 / NCIMB 13768 / 1H11)).